Reading from the N-terminus, the 88-residue chain is UPF0223 protein YktA (88 aa).

The protein belongs to the UPF0223 family.

The sequence is that of UPF0223 protein YktA (yktA) from Bacillus subtilis (strain 168).